The following is a 968-amino-acid chain: RNA polymerase-associated protein RapA (968 aa).

The region spanning 164-334 (DVGRRHAPRV…FARLRLLDPD (171 aa)) is the Helicase ATP-binding domain. Position 177–184 (177–184 (DEVGLGKT)) interacts with ATP. A DEAH box motif is present at residues 280–283 (DEAH). The 154-residue stretch at 490-643 (RVEWLMGYLT…HTCPTGRAVY (154 aa)) folds into the Helicase C-terminal domain.

It belongs to the SNF2/RAD54 helicase family. RapA subfamily. As to quaternary structure, interacts with the RNAP. Has a higher affinity for the core RNAP than for the holoenzyme. Its ATPase activity is stimulated by binding to RNAP.

Functionally, transcription regulator that activates transcription by stimulating RNA polymerase (RNAP) recycling in case of stress conditions such as supercoiled DNA or high salt concentrations. Probably acts by releasing the RNAP, when it is trapped or immobilized on tightly supercoiled DNA. Does not activate transcription on linear DNA. Probably not involved in DNA repair. The polypeptide is RNA polymerase-associated protein RapA (Erwinia tasmaniensis (strain DSM 17950 / CFBP 7177 / CIP 109463 / NCPPB 4357 / Et1/99)).